The primary structure comprises 57 residues: COP9 signalosome complex subunit 9 (57 aa).

The residue at position 26 (Thr26) is a Phosphothreonine.

This sequence belongs to the CSN9 family. Component of the CSN complex, composed of COPS1/GPS1, COPS2, COPS3, COPS4, COPS5, COPS6, COPS7 (COPS7A or COPS7B), COPS8 and COPS9. In the complex, it interacts directly with COPS3, COPS5 and COPS6.

The protein resides in the nucleus. The protein localises to the cytoplasm. It is found in the nucleoplasm. Functionally, component of the COP9 signalosome complex (CSN), a complex involved in various cellular and developmental processes. The CSN complex is an essential regulator of the ubiquitin (Ubl) conjugation pathway by mediating the deneddylation of the cullin subunits of SCF-type E3 ligase complexes, leading to decrease the Ubl ligase activity of SCF-type complexes such as SCF, CSA or DDB2. The complex is also involved in phosphorylation of p53/TP53, c-jun/JUN, IkappaBalpha/NFKBIA, ITPK1 and IRF8/ICSBP, possibly via its association with CK2 and PKD kinases. CSN-dependent phosphorylation of TP53 and JUN promotes and protects degradation by the Ubl system, respectively. Plays a role in cell proliferation. The sequence is that of COP9 signalosome complex subunit 9 from Bos taurus (Bovine).